A 324-amino-acid chain; its full sequence is Bile salt hydrolase/transferase (324 aa).

The Nucleophile; acyl-thioester intermediate role is filled by C2. The deoxycholate site is built by C2 and R16. N79 is a binding site for taurine.

It belongs to the peptidase C59 family. In terms of assembly, homotetramer. The tetramer consists of a dimer of dimers.

The enzyme catalyses glycocholate + H2O = cholate + glycine. The catalysed reaction is glycodeoxycholate + H2O = deoxycholate + glycine. It carries out the reaction chenodeoxycholate + glycine = glycochenodeoxycholate + H2O. It catalyses the reaction cholate + taurine = taurocholate + H2O. The enzyme catalyses taurodeoxycholate + H2O = deoxycholate + taurine. The catalysed reaction is taurochenodeoxycholate + H2O = chenodeoxycholate + taurine. It carries out the reaction an L-alpha-amino acid + cholate = an N-choloyl-L-alpha-amino acid + H2O. It catalyses the reaction an L-alpha-amino acid + taurocholate = an N-choloyl-L-alpha-amino acid + taurine. The enzyme catalyses glycocholate + an L-alpha-amino acid = an N-choloyl-L-alpha-amino acid + glycine. It functions in the pathway lipid metabolism; bile acid biosynthesis. Functionally, possesses dual functions in bile acid metabolism. Acts as a bile salt hydrolase that catalyzes the deconjugation of glycine- and taurine-linked bile salts, which occurs naturally in the intestines of animals, releasing amino acid residues and deconjugated bile salts (bile acids). Can hydrolyze the amide bond in the bile salts glycocholate (GCA), glycodeoxycholate (GDCA), glycochenodeoxycholate (GCDCA), taurocholate (TCA), taurodeoxycholate (TDCA) and taurochenodeoxycholate (TCDCA). Shows a preference for glycine-conjugated bile acids as substrates. Also acts as an amine N-acyltransferase that conjugates a wide variety of amino acids to conjugated and non-conjugated bile acids, thus producing bacterial bile acid amidates (BBAAs) - also named microbially conjugated bile acids (MCBAs) - in the gastrointestinal tract. These BBAAs may facilitate communication between the microbiota and host through the activation of host ligand-activated transcription factors. The protein is Bile salt hydrolase/transferase of Lactiplantibacillus plantarum (strain ATCC BAA-793 / NCIMB 8826 / WCFS1) (Lactobacillus plantarum).